Reading from the N-terminus, the 305-residue chain is Ribonuclease Z (305 aa).

Zn(2+) contacts are provided by His61, His63, Asp65, His66, His138, Asp208, and His266. Asp65 functions as the Proton acceptor in the catalytic mechanism.

This sequence belongs to the RNase Z family. Homodimer. The cofactor is Zn(2+).

The enzyme catalyses Endonucleolytic cleavage of RNA, removing extra 3' nucleotides from tRNA precursor, generating 3' termini of tRNAs. A 3'-hydroxy group is left at the tRNA terminus and a 5'-phosphoryl group is left at the trailer molecule.. Functionally, zinc phosphodiesterase, which displays some tRNA 3'-processing endonuclease activity. Probably involved in tRNA maturation, by removing a 3'-trailer from precursor tRNA. This is Ribonuclease Z from Methanosarcina acetivorans (strain ATCC 35395 / DSM 2834 / JCM 12185 / C2A).